We begin with the raw amino-acid sequence, 228 residues long: Archaeal flagellar ATP-binding protein FlaH (228 aa).

Positions 30, 31, 33, 34, 35, 57, and 191 each coordinate ATP. Ser-34 is a binding site for Mg(2+). Glu-57 lines the Mg(2+) pocket.

This sequence belongs to the FlaH family. The S.acidocaldarius archaellum assembly machinery and its filament consist of seven proteins (FlaB, FlaF, FlaG, FlaH, FlaI, FlaJ and FlaX). Interacts directly with the FlaX ring and the motor ATPase FlaI. Monomers, which can probably form homohexamers upon binding to ATP. In vitro, FlaH assembles as a second ring inside the FlaX ring.

The protein resides in the archaeal flagellum. It localises to the cytoplasm. In terms of biological role, component of the archaellum. FlaX, FlaH and FlaI form the core cytoplasmic motor complex of the crenarchaeal archaellum. FlaH binds ATP with high affinity but lacks detectable in vitro ATPase activity. ATP binding is essential for interaction with FlaI and for archaellum assembly. This chain is Archaeal flagellar ATP-binding protein FlaH, found in Sulfolobus acidocaldarius (strain ATCC 33909 / DSM 639 / JCM 8929 / NBRC 15157 / NCIMB 11770).